We begin with the raw amino-acid sequence, 187 residues long: ATP synthase subunit delta (187 aa).

It belongs to the ATPase delta chain family. In terms of assembly, F-type ATPases have 2 components, F(1) - the catalytic core - and F(0) - the membrane proton channel. F(1) has five subunits: alpha(3), beta(3), gamma(1), delta(1), epsilon(1). F(0) has three main subunits: a(1), b(2) and c(10-14). The alpha and beta chains form an alternating ring which encloses part of the gamma chain. F(1) is attached to F(0) by a central stalk formed by the gamma and epsilon chains, while a peripheral stalk is formed by the delta and b chains.

It is found in the cell inner membrane. Its function is as follows. F(1)F(0) ATP synthase produces ATP from ADP in the presence of a proton or sodium gradient. F-type ATPases consist of two structural domains, F(1) containing the extramembraneous catalytic core and F(0) containing the membrane proton channel, linked together by a central stalk and a peripheral stalk. During catalysis, ATP synthesis in the catalytic domain of F(1) is coupled via a rotary mechanism of the central stalk subunits to proton translocation. This protein is part of the stalk that links CF(0) to CF(1). It either transmits conformational changes from CF(0) to CF(1) or is implicated in proton conduction. This is ATP synthase subunit delta from Leptospira biflexa serovar Patoc (strain Patoc 1 / Ames).